We begin with the raw amino-acid sequence, 319 residues long: MSKKTKQELENNKLSKRLRHAVGDAINDFNMIEPDDKIMVCLSGGKDSYALLDILRQLQASAPIDFELVAVNLDQKQPGFPEEVLPTYLESIGVPYKIVEEDTYSTVKRVLDEGKTTCSLCSRLRRGILYRTAKELGCTKIALGHHRDDILATMFLNMFYGGKLKAMPPKLVSDNGEHIVIRPLAYVKEKDLIKYAELKQFPIIPCNLCGSQPNLQRQVIGDMLRDWDKRFPGRIESMFSALQNVVPSHLADTELFDFAGLERGQTLKHGGDLAFDSEKMPERFSDGSEEDESEIKIAPQKAERKVINILANKPKTCGA.

The PP-loop motif signature appears at 43–48; that stretch reads SGGKDS. Residues C118, C121, and C209 each coordinate [4Fe-4S] cluster.

The protein belongs to the TtcA family. As to quaternary structure, homodimer. It depends on Mg(2+) as a cofactor. The cofactor is [4Fe-4S] cluster.

It localises to the cytoplasm. It carries out the reaction cytidine(32) in tRNA + S-sulfanyl-L-cysteinyl-[cysteine desulfurase] + AH2 + ATP = 2-thiocytidine(32) in tRNA + L-cysteinyl-[cysteine desulfurase] + A + AMP + diphosphate + H(+). The protein operates within tRNA modification. Functionally, catalyzes the ATP-dependent 2-thiolation of cytidine in position 32 of tRNA, to form 2-thiocytidine (s(2)C32). The sulfur atoms are provided by the cysteine/cysteine desulfurase (IscS) system. The sequence is that of tRNA-cytidine(32) 2-sulfurtransferase from Neisseria meningitidis serogroup C / serotype 2a (strain ATCC 700532 / DSM 15464 / FAM18).